A 309-amino-acid chain; its full sequence is Acetyl-coenzyme A carboxylase carboxyl transferase subunit beta (309 aa).

The 270-residue stretch at 27-296 (LWKKCPKCGA…PGTEAPIEFE (270 aa)) folds into the CoA carboxyltransferase N-terminal domain. Residues Cys-31, Cys-34, Cys-50, and Cys-53 each coordinate Zn(2+). The segment at 31 to 53 (CPKCGAFLYKPELEKNLDVCPKC) adopts a C4-type zinc-finger fold. The interval 288–309 (GTEAPIEFEVTEKPDVDEPEGQ) is disordered.

The protein belongs to the AccD/PCCB family. Acetyl-CoA carboxylase is a heterohexamer composed of biotin carboxyl carrier protein (AccB), biotin carboxylase (AccC) and two subunits each of ACCase subunit alpha (AccA) and ACCase subunit beta (AccD). Zn(2+) serves as cofactor.

It localises to the cytoplasm. It catalyses the reaction N(6)-carboxybiotinyl-L-lysyl-[protein] + acetyl-CoA = N(6)-biotinyl-L-lysyl-[protein] + malonyl-CoA. It functions in the pathway lipid metabolism; malonyl-CoA biosynthesis; malonyl-CoA from acetyl-CoA: step 1/1. In terms of biological role, component of the acetyl coenzyme A carboxylase (ACC) complex. Biotin carboxylase (BC) catalyzes the carboxylation of biotin on its carrier protein (BCCP) and then the CO(2) group is transferred by the transcarboxylase to acetyl-CoA to form malonyl-CoA. This chain is Acetyl-coenzyme A carboxylase carboxyl transferase subunit beta, found in Marinobacter nauticus (strain ATCC 700491 / DSM 11845 / VT8) (Marinobacter aquaeolei).